The primary structure comprises 213 residues: Thiopurine S-methyltransferase (213 aa).

S-adenosyl-L-methionine is bound by residues tryptophan 10, leucine 45, glutamate 66, and arginine 121.

This sequence belongs to the class I-like SAM-binding methyltransferase superfamily. TPMT family.

It is found in the cytoplasm. It carries out the reaction S-adenosyl-L-methionine + a thiopurine = S-adenosyl-L-homocysteine + a thiopurine S-methylether.. The polypeptide is Thiopurine S-methyltransferase (Aliivibrio fischeri (strain ATCC 700601 / ES114) (Vibrio fischeri)).